The following is a 243-amino-acid chain: uncharacterized protein (243 aa).

The signal sequence occupies residues 1-19; sequence MKSLPLLGILAFAANRLSA. Asn112 and Asn206 each carry an N-linked (GlcNAc...) asparagine glycan.

This is an uncharacterized protein from Encephalitozoon cuniculi (strain GB-M1) (Microsporidian parasite).